The sequence spans 743 residues: MARKLSVILILTFALSVTNPLHELKAAAFPQTTEKISPNWESGINVDLAITTRQYHLQQLFYRYGENNSLSVEGFRKLLQNIGIDKIKRIHIHHDHEHHSDHEHHSDHEHHSDHEHHSHRNHAASGKNKRKALCPDHDSDSSGKDPRNSQGKGAHRSEHASGRRNVKDSVSASEVTSTVYNTVSEGTHFLETIETPRPGKLFPKDVSSSTPPSVTEKSRGSRLAGRKTNESVSEPRKGFMYSRNTNENPQECFNASKLLTSHGMGIQVPLNATEFNYLCPAIINQIDARSCLIHTSEKKAEIPPKTYSLQIAWVGGFIAISIISFLSLLGVILVPLMNRVFFKFLLSFLVALAVGTLSGDAFLHLLPHSHASHHHSHSHEEPAMEMKRGPLFSHLSSQNIEESAYFDSTWKGLTALGGLYFMFLVEHVLTLIKQFKDKKKKNQKKPENDDDVEIKKQLSKYESQLSTNEEKVDTDDRTEGYLRADSQEPSHFDSQQPAILEEEEVMIAHAHPQEVYNEYVPRGCKNKCHSHFHDTLGQSDDLIHHHHDYHHILHHHHHQNHHPHSHSQRYSREELKDAGIATLAWMVIMGDGLHNFSDGLAIGAAFTEGLSSGLSTSVAVFCHELPHELGDFAVLLKAGMTVKQAVLYNALSAMLAYLGMATGIFIGHYAENVSMWIFALTAGLFMYVALVDMVPEMLHNDASDHGCSRWGYFFLQNAGMLLGFGIMLLISIFEHKIVFRINF.

Residues 1-20 form the signal peptide; it reads MARKLSVILILTFALSVTNP. Over 21–313 the chain is Extracellular; that stretch reads LHELKAAAFP…PKTYSLQIAW (293 aa). Asparagine 67 carries N-linked (GlcNAc...) asparagine glycosylation. Positions 96 to 116 are enriched in basic and acidic residues; the sequence is HEHHSDHEHHSDHEHHSDHEH. Disordered stretches follow at residues 96 to 174 and 190 to 245; these read HEHH…SASE and LETI…SRNT. Over residues 117 to 132 the composition is skewed to basic residues; that stretch reads HSHRNHAASGKNKRKA. 2 stretches are compositionally biased toward basic and acidic residues: residues 133-147 and 155-167; these read LCPD…KDPR and HRSE…RNVK. The segment covering 206 to 215 has biased composition (polar residues); that stretch reads VSSSTPPSVT. Over residues 227–237 the composition is skewed to basic and acidic residues; sequence KTNESVSEPRK. N-linked (GlcNAc...) asparagine glycans are attached at residues asparagine 229, asparagine 254, and asparagine 271. Residues 314–334 traverse the membrane as a helical segment; that stretch reads VGGFIAISIISFLSLLGVILV. Topologically, residues 335–343 are cytoplasmic; that stretch reads PLMNRVFFK. Residues 344–364 form a helical membrane-spanning segment; it reads FLLSFLVALAVGTLSGDAFLH. The Extracellular segment spans residues 365–411; it reads LLPHSHASHHHSHSHEEPAMEMKRGPLFSHLSSQNIEESAYFDSTWK. Residues 412–432 form a helical membrane-spanning segment; it reads GLTALGGLYFMFLVEHVLTLI. The Cytoplasmic portion of the chain corresponds to 433–645; that stretch reads KQFKDKKKKN…LKAGMTVKQA (213 aa). A coiled-coil region spans residues 452–474; it reads VEIKKQLSKYESQLSTNEEKVDT. 2 positions are modified to phosphoserine: serine 459 and serine 466. A helical membrane pass occupies residues 646 to 666; it reads VLYNALSAMLAYLGMATGIFI. The Extracellular portion of the chain corresponds to 667–674; that stretch reads GHYAENVS. The N-linked (GlcNAc...) asparagine glycan is linked to asparagine 672. Residues 675-695 traverse the membrane as a helical segment; it reads MWIFALTAGLFMYVALVDMVP. Residues 696–712 are Cytoplasmic-facing; that stretch reads EMLHNDASDHGCSRWGY. The chain crosses the membrane as a helical span at residues 713–733; that stretch reads FFLQNAGMLLGFGIMLLISIF. The Extracellular portion of the chain corresponds to 734–743; the sequence is EHKIVFRINF.

The protein belongs to the ZIP transporter (TC 2.A.5) family. Interacts with SLC39A10; which triggers cells to undergo EMT and mitosis. Found in a complex with SLC39A6, SLC39A10 and with the 'Ser-727' phosphorylated form of STAT3 throughout mitosis. Found in a complex with SLC39A6, SLC39A10 and with NCAM1; this complex controls NCAM1 phosphorylation and integration into focal adhesion complexes during epithelial-to-mesenchymal transition (EMT). Found in a complex with SLC39A6, SLC39A10 and with GSK3B that controls NCAM1 phosphorylation. Cleaved on the N-terminus before locating to the plasma membrane. In terms of processing, N-glycosylated. Post-translationally, phosphorylated by ZAP70 in response to TCR stimulation leading to its activation.

The protein localises to the cell membrane. The protein resides in the cell projection. It localises to the lamellipodium membrane. It is found in the membrane raft. Its subcellular location is the apical cell membrane. The catalysed reaction is Zn(2+)(in) = Zn(2+)(out). Its function is as follows. Zinc-influx transporter which plays a role in zinc homeostasis and in the induction of epithelial-to-mesenchymal transition (EMT). When associated with SLC39A10, the heterodimer formed by SLC39A10 and SLC39A6 mediates cellular zinc uptake to trigger cells to undergo epithelial- to-mesenchymal transition (EMT). The SLC39A10-SLC39A6 heterodimer also controls NCAM1 phosphorylation and its integration into focal adhesion complexes during EMT. Zinc influx inactivates GSK3B, enabling unphosphorylated SNAI1 in the nucleus to down-regulate adherence genes such as CDH1, causing loss of cell adherence. In addition, the SLC39A10-SLC39A6 heterodimer plays an essentiel role in initiating mitosis by importing zinc into cells to initiate a pathway resulting in the onset of mitosis. Participates in the T-cell receptor signaling regulation by mediating cellular zinc uptake into activated lymphocytes. Regulates the zinc influx necessary for proper meiotic progression to metaphase II (MII) that allows the oocyte-to-egg transition. The sequence is that of Zinc transporter ZIP6 from Pongo abelii (Sumatran orangutan).